Consider the following 580-residue polypeptide: Type 3 secretion system translocon protein SctE (580 aa).

IpgC chaperone binding domain stretches follow at residues 15 to 45 and 51 to 72; these read KILT…IADL and INTT…APKS. The segment at 61-70 is mediates interaction with human MAD2L2; sequence NILIPELKAP. A coiled-coil region spans residues 104–224; sequence AWKSQQQARQ…MQLEKEIDSF (121 aa). 2 helical membrane passes run 313–333 and 399–419; these read ILGA…GGAS and IGSI…VVLV.

The protein belongs to the SctE/SipB/YopB family. In terms of assembly, the core secretion machinery of the T3SS is composed of approximately 20 different proteins, including cytoplasmic components, a base, an export apparatus and a needle. This subunit is involved in the formation of a pore, called the translocon, in host membrane. Interacts with IpaC/SctB. Interacts with the needle tip protein IpaD/SctA. Interacts with the molecular chaperone IpgC, which prevents premature association with IpaC/SctB within the cytoplasm of Shigella cells and protects IpaB/SctE from proteolysis. Interacts with the host protein ICE in the cytoplasm of infected macrophages. Interacts with human MAD2L2 in the G2/M phase of the cell cycle.

It localises to the secreted. It is found in the host membrane. The protein resides in the host cell. Its subcellular location is the host nucleus. Its activity is regulated as follows. Interaction with the membrane is affected by the pH. IpaB/SctE is more efficient in destabilizing the membrane at pH 5.0 than at neutral pH. Its function is as follows. Component of the type III secretion system (T3SS), also called injectisome, which is used to inject bacterial effector proteins into eukaryotic host cells. IpaB/SctE and IpaC/SctB are inserted into the host membrane where they form a pore and allow the translocation of effector proteins into the cytosol of target cells. Interaction with IpaD/SctA at needle tips leads to the formation of the MxiH/SctF-IpaD/SctA-IpaB/SctE ternary complex, which is essential for host cell sensing. Interaction of IpaB/SctE with host membrane lipids promotes recruitment of IpaC/SctB at the needle tip concomitant with translocon insertion into the host membrane and type III secretion induction. In terms of biological role, required for efficient dissemination. Necessary for lysis of the two cellular membranes that surround bacteria in protrusions during cell-to-cell spread. Is sufficient to induce macrophage apoptosis through activation of the interleukin-1 beta converting enzyme (ICE) in infected macrophages. In epithelial cells, causes cell-cycle arrest by targeting host MAD2L2, an anaphase-promoting complex/cyclosome (APC) inhibitor. This chain is Type 3 secretion system translocon protein SctE, found in Shigella flexneri.